A 171-amino-acid chain; its full sequence is uncharacterized protein (171 aa).

This is an uncharacterized protein from Orgyia pseudotsugata multicapsid polyhedrosis virus (OpMNPV).